The primary structure comprises 699 residues: Elongation factor G 1 (699 aa).

Residues 8–290 (EHYRNIGICA…AVIEFLPSPS (283 aa)) enclose the tr-type G domain. GTP contacts are provided by residues 17-24 (AHVDAGKT), 88-92 (DTPGH), and 142-145 (NKMD).

The protein belongs to the TRAFAC class translation factor GTPase superfamily. Classic translation factor GTPase family. EF-G/EF-2 subfamily.

It is found in the cytoplasm. In terms of biological role, catalyzes the GTP-dependent ribosomal translocation step during translation elongation. During this step, the ribosome changes from the pre-translocational (PRE) to the post-translocational (POST) state as the newly formed A-site-bound peptidyl-tRNA and P-site-bound deacylated tRNA move to the P and E sites, respectively. Catalyzes the coordinated movement of the two tRNA molecules, the mRNA and conformational changes in the ribosome. This chain is Elongation factor G 1, found in Vibrio parahaemolyticus serotype O3:K6 (strain RIMD 2210633).